The primary structure comprises 258 residues: Phosphate import ATP-binding protein PstB 2 (258 aa).

Positions 12-253 (IQVRDLNFYY…PRQKQTEDYI (242 aa)) constitute an ABC transporter domain. An ATP-binding site is contributed by 44 to 51 (GPSGCGKS).

It belongs to the ABC transporter superfamily. Phosphate importer (TC 3.A.1.7) family. As to quaternary structure, the complex is composed of two ATP-binding proteins (PstB), two transmembrane proteins (PstC and PstA) and a solute-binding protein (PstS).

The protein resides in the cell inner membrane. It catalyses the reaction phosphate(out) + ATP + H2O = ADP + 2 phosphate(in) + H(+). In terms of biological role, part of the ABC transporter complex PstSACB involved in phosphate import. Responsible for energy coupling to the transport system. This Pectobacterium atrosepticum (strain SCRI 1043 / ATCC BAA-672) (Erwinia carotovora subsp. atroseptica) protein is Phosphate import ATP-binding protein PstB 2.